The sequence spans 67 residues: Amphipathic peptide Tx348 (67 aa).

An N-terminal signal peptide occupies residues 1–23 (MKSQAFFLLFLVVLLLATTQSEA). Phenylalanine 33 is subject to Phenylalanine amide. Residues 37-67 (SMRNMDTMKYLYDPSLSAADLKTLQKLMENY) constitute a propeptide that is removed on maturation.

The protein belongs to the non-disulfide-bridged peptide (NDBP) superfamily. Short antimicrobial peptide (group 4) family. Expressed by the venom gland.

It localises to the secreted. The protein resides in the target cell membrane. Its function is as follows. Amphipathic peptide that has antibacterial activities. In Buthus israelis (Israeli scorpion), this protein is Amphipathic peptide Tx348.